Here is a 457-residue protein sequence, read N- to C-terminus: L-asparaginase-like protein GA18140 (457 aa).

The signal sequence occupies residues 1–20; the sequence is MRYLCRAQLLSLLLLPLLKA. 3 disulfide bridges follow: Cys72/Cys78, Cys172/Cys188, and Cys327/Cys354.

Belongs to the Ntn-hydrolase family.

This chain is L-asparaginase-like protein GA18140, found in Drosophila pseudoobscura pseudoobscura (Fruit fly).